Consider the following 400-residue polypeptide: Involucrin (400 aa).

Disordered regions lie at residues 1-196 (MSQQ…HLKQ), 273-312 (KEEV…EQQL), and 333-381 (KRDE…KGEV). Composition is skewed to low complexity over residues 78–159 (QQQQ…QQHQ), 169–186 (EQQQ…GQQE), and 279–292 (EQQQ…QQHQ). A compositionally biased stretch (basic and acidic residues) spans 333–344 (KRDEQLGKKEEQ). The span at 346 to 358 (LEPSEQQEGLLEQ) shows a compositional bias: low complexity.

The protein belongs to the involucrin family. In terms of assembly, directly or indirectly cross-linked to cornifelin (CNFN). Post-translationally, substrate of transglutaminase. Specific glutamines or lysines are cross-linked to keratins, desmoplakin and to inter involucrin molecules. In terms of tissue distribution, keratinocytes of epidermis and other stratified squamous epithelia.

It localises to the cytoplasm. Its function is as follows. Part of the insoluble cornified cell envelope (CE) of stratified squamous epithelia. In Tupaia glis (Common tree shrew), this protein is Involucrin (IVL).